We begin with the raw amino-acid sequence, 373 residues long: Anhydro-N-acetylmuramic acid kinase (373 aa).

13–20 (GTSMDGID) provides a ligand contact to ATP.

This sequence belongs to the anhydro-N-acetylmuramic acid kinase family.

It carries out the reaction 1,6-anhydro-N-acetyl-beta-muramate + ATP + H2O = N-acetyl-D-muramate 6-phosphate + ADP + H(+). It functions in the pathway amino-sugar metabolism; 1,6-anhydro-N-acetylmuramate degradation. Its pathway is cell wall biogenesis; peptidoglycan recycling. Functionally, catalyzes the specific phosphorylation of 1,6-anhydro-N-acetylmuramic acid (anhMurNAc) with the simultaneous cleavage of the 1,6-anhydro ring, generating MurNAc-6-P. Is required for the utilization of anhMurNAc either imported from the medium or derived from its own cell wall murein, and thus plays a role in cell wall recycling. The polypeptide is Anhydro-N-acetylmuramic acid kinase (Brucella suis (strain ATCC 23445 / NCTC 10510)).